Reading from the N-terminus, the 278-residue chain is Ribosomal RNA small subunit methyltransferase A (278 aa).

S-adenosyl-L-methionine is bound by residues asparagine 25, leucine 27, glycine 52, glutamate 73, aspartate 97, and asparagine 117.

The protein belongs to the class I-like SAM-binding methyltransferase superfamily. rRNA adenine N(6)-methyltransferase family. RsmA subfamily.

The protein localises to the cytoplasm. It catalyses the reaction adenosine(1518)/adenosine(1519) in 16S rRNA + 4 S-adenosyl-L-methionine = N(6)-dimethyladenosine(1518)/N(6)-dimethyladenosine(1519) in 16S rRNA + 4 S-adenosyl-L-homocysteine + 4 H(+). Its function is as follows. Specifically dimethylates two adjacent adenosines (A1518 and A1519) in the loop of a conserved hairpin near the 3'-end of 16S rRNA in the 30S particle. May play a critical role in biogenesis of 30S subunits. In Desulfitobacterium hafniense (strain DSM 10664 / DCB-2), this protein is Ribosomal RNA small subunit methyltransferase A.